A 57-amino-acid polypeptide reads, in one-letter code: uncharacterized protein (57 aa).

Residues 4–26 form a helical membrane-spanning segment; sequence FMPIRVFLYSYVIINSLLSSFFH.

The protein localises to the membrane. This is an uncharacterized protein from Saccharomyces cerevisiae (strain ATCC 204508 / S288c) (Baker's yeast).